Consider the following 193-residue polypeptide: T-cell receptor-associated transmembrane adapter 1 (193 aa).

Over 1 to 10 (MSGNAECHFS) the chain is Extracellular. Residues 11–31 (IWAILAFLGLALTISLIFNIF) traverse the membrane as a helical; Signal-anchor for type III membrane protein segment. Residues 32–193 (HCVEKQRQEK…LHSLDYDLAQ (162 aa)) are Cytoplasmic-facing. Residue Ser46 is modified to Phosphoserine. Residue Tyr80 is modified to Phosphotyrosine. The interval 80 to 83 (YEQM) is interaction with PIK3R1. The segment at 116-166 (NEGKRRKPRKQKSHLSDKDEEGQMHAKDISLSKTTLVDSYPPESEAIEENI) is disordered. The segment covering 119-128 (KRRKPRKQKS) has biased composition (basic residues). The segment covering 129–145 (HLSDKDEEGQMHAKDIS) has biased composition (basic and acidic residues).

In terms of assembly, homodimer; disulfide-linked. Interacts with CD3Z. When phosphorylated, interacts with PIK3R1. Post-translationally, phosphorylated on tyrosines upon TCR activation.

It localises to the cell membrane. In terms of biological role, stabilizes the TCR (T-cell antigen receptor)/CD3 complex at the surface of T-cells. The polypeptide is T-cell receptor-associated transmembrane adapter 1 (TRAT1) (Bos taurus (Bovine)).